The following is a 524-amino-acid chain: Indoleacetamide hydrolase (524 aa).

2 stretches are compositionally biased toward basic residues: residues 1 to 26 and 34 to 54; these read MAKK…KATA and AAKK…RRPK. Residues 1–56 are disordered; that stretch reads MAKKTASKKKSVSRKVTKTSSKKATARKGAVAKAAKKSVKKAAPRKSATARRPKGP. Active-site charge relay system residues include lysine 133 and serine 208. Catalysis depends on serine 232, which acts as the Acyl-ester intermediate.

It belongs to the amidase family.

Its pathway is plant hormone metabolism; auxin biosynthesis. Its function is as follows. Hydrolyzes indole-3-acetamide (IAM) into indole-3-acetic acid (IAA). The chain is Indoleacetamide hydrolase (bam) from Bradyrhizobium diazoefficiens (strain JCM 10833 / BCRC 13528 / IAM 13628 / NBRC 14792 / USDA 110).